Consider the following 104-residue polypeptide: Chromogranin-A (104 aa).

Cysteine 17 and cysteine 38 are disulfide-bonded.

The protein belongs to the chromogranin/secretogranin protein family. In terms of assembly, dimer.

It is found in the cytoplasmic vesicle. It localises to the secretory vesicle. The protein localises to the secreted. Functionally, chromogranin A probably has a paracrine role in the regulation of secretion or maturation. This chain is Chromogranin-A (CHGA), found in Struthio camelus (Common ostrich).